Reading from the N-terminus, the 138-residue chain is Large ribosomal subunit protein mL43 (138 aa).

It belongs to the mitochondrion-specific ribosomal protein mL43 family. Component of the mitochondrial large ribosomal subunit (mt-LSU). Mature N.crassa 74S mitochondrial ribosomes consist of a small (37S) and a large (54S) subunit. The 37S small subunit contains a 16S ribosomal RNA (16S mt-rRNA) and 32 different proteins. The 54S large subunit contains a 23S rRNA (23S mt-rRNA) and 42 different proteins.

Its subcellular location is the mitochondrion. Functionally, component of the mitochondrial ribosome (mitoribosome), a dedicated translation machinery responsible for the synthesis of mitochondrial genome-encoded proteins, including at least some of the essential transmembrane subunits of the mitochondrial respiratory chain. The mitoribosomes are attached to the mitochondrial inner membrane and translation products are cotranslationally integrated into the membrane. This is Large ribosomal subunit protein mL43 (mrpl51) from Neurospora crassa (strain ATCC 24698 / 74-OR23-1A / CBS 708.71 / DSM 1257 / FGSC 987).